The primary structure comprises 476 residues: Glutamate--tRNA ligase (476 aa).

The short motif at 9 to 19 (PSPTGTLHIGT) is the 'HIGH' region element. The 'KMSKS' region motif lies at 248-252 (KLSKR). Lysine 251 contacts ATP.

Belongs to the class-I aminoacyl-tRNA synthetase family. Glutamate--tRNA ligase type 1 subfamily. Monomer.

It is found in the cytoplasm. The enzyme catalyses tRNA(Glu) + L-glutamate + ATP = L-glutamyl-tRNA(Glu) + AMP + diphosphate. In terms of biological role, catalyzes the attachment of glutamate to tRNA(Glu) in a two-step reaction: glutamate is first activated by ATP to form Glu-AMP and then transferred to the acceptor end of tRNA(Glu). In Prochlorococcus marinus (strain MIT 9303), this protein is Glutamate--tRNA ligase.